We begin with the raw amino-acid sequence, 222 residues long: N-(5'-phosphoribosyl)anthranilate isomerase (222 aa).

It belongs to the TrpF family.

The catalysed reaction is N-(5-phospho-beta-D-ribosyl)anthranilate = 1-(2-carboxyphenylamino)-1-deoxy-D-ribulose 5-phosphate. It functions in the pathway amino-acid biosynthesis; L-tryptophan biosynthesis; L-tryptophan from chorismate: step 3/5. The protein is N-(5'-phosphoribosyl)anthranilate isomerase of Brevibacillus brevis (strain 47 / JCM 6285 / NBRC 100599).